A 203-amino-acid polypeptide reads, in one-letter code: Protein GrpE (203 aa).

The segment covering M1–M20 has biased composition (basic and acidic residues). The segment at M1–A38 is disordered.

Belongs to the GrpE family. Homodimer.

It localises to the cytoplasm. Its function is as follows. Participates actively in the response to hyperosmotic and heat shock by preventing the aggregation of stress-denatured proteins, in association with DnaK and GrpE. It is the nucleotide exchange factor for DnaK and may function as a thermosensor. Unfolded proteins bind initially to DnaJ; upon interaction with the DnaJ-bound protein, DnaK hydrolyzes its bound ATP, resulting in the formation of a stable complex. GrpE releases ADP from DnaK; ATP binding to DnaK triggers the release of the substrate protein, thus completing the reaction cycle. Several rounds of ATP-dependent interactions between DnaJ, DnaK and GrpE are required for fully efficient folding. The protein is Protein GrpE of Proteus mirabilis (strain HI4320).